Here is a 279-residue protein sequence, read N- to C-terminus: Octanoyl-[GcvH]:protein N-octanoyltransferase (279 aa).

Positions 48–253 constitute a BPL/LPL catalytic domain; it reads ETSPPVIRLW…TLEKLSDEIV (206 aa). Residue Cys152 is the Acyl-thioester intermediate of the active site.

Belongs to the octanoyltransferase LipL family.

It catalyses the reaction N(6)-octanoyl-L-lysyl-[glycine-cleavage complex H protein] + L-lysyl-[lipoyl-carrier protein] = N(6)-octanoyl-L-lysyl-[lipoyl-carrier protein] + L-lysyl-[glycine-cleavage complex H protein]. It participates in protein modification; protein lipoylation via endogenous pathway; protein N(6)-(lipoyl)lysine from octanoyl-[acyl-carrier-protein]. In terms of biological role, catalyzes the amidotransfer (transamidation) of the octanoyl moiety from octanoyl-GcvH to the lipoyl domain of the E2 subunit of lipoate-dependent enzymes. In Oceanobacillus iheyensis (strain DSM 14371 / CIP 107618 / JCM 11309 / KCTC 3954 / HTE831), this protein is Octanoyl-[GcvH]:protein N-octanoyltransferase.